A 311-amino-acid chain; its full sequence is tRNA dimethylallyltransferase (311 aa).

An ATP-binding site is contributed by 9-16 (GPTAVGKT). 11 to 16 (TAVGKT) provides a ligand contact to substrate. The tract at residues 34 to 37 (DSMQ) is interaction with substrate tRNA.

It belongs to the IPP transferase family. In terms of assembly, monomer. The cofactor is Mg(2+).

The enzyme catalyses adenosine(37) in tRNA + dimethylallyl diphosphate = N(6)-dimethylallyladenosine(37) in tRNA + diphosphate. Catalyzes the transfer of a dimethylallyl group onto the adenine at position 37 in tRNAs that read codons beginning with uridine, leading to the formation of N6-(dimethylallyl)adenosine (i(6)A). The protein is tRNA dimethylallyltransferase of Clostridium botulinum (strain Okra / Type B1).